Reading from the N-terminus, the 368-residue chain is Aminomethyltransferase (368 aa).

It belongs to the GcvT family. As to quaternary structure, the glycine cleavage system is composed of four proteins: P, T, L and H.

It catalyses the reaction N(6)-[(R)-S(8)-aminomethyldihydrolipoyl]-L-lysyl-[protein] + (6S)-5,6,7,8-tetrahydrofolate = N(6)-[(R)-dihydrolipoyl]-L-lysyl-[protein] + (6R)-5,10-methylene-5,6,7,8-tetrahydrofolate + NH4(+). Its function is as follows. The glycine cleavage system catalyzes the degradation of glycine. In Xylella fastidiosa (strain M12), this protein is Aminomethyltransferase.